The chain runs to 129 residues: Serum amyloid A-1 protein (129 aa).

The N-terminal stretch at 1–18 is a signal peptide; it reads MKLFTGLIFCSLVLGVSS. Positions 19–44 are important for amyloid formation; sequence QWYSFIGEAAQGAWDMYRAYSDMIEA. The disordered stretch occupies residues 92-129; sequence GDSGHGVEDSKADQAANEWGRSGKDPNHFRPPGLPDKY.

This sequence belongs to the SAA family. Homohexamer; dimer of trimers. Can form amyloid fibrils after partial proteolysis; the native, undenatured protein does not form amyloid fibrils (in vitro). Apolipoprotein of the HDL complex. Binds to heparin. As to expression, detected in liver.

Its subcellular location is the secreted. Its function is as follows. Major acute phase protein. The sequence is that of Serum amyloid A-1 protein (SAA1) from Neovison vison (American mink).